We begin with the raw amino-acid sequence, 248 residues long: Murein peptide amidase A (248 aa).

Residues 3-245 (RYYSNNQEIT…DAFIALLQHD (243 aa)) form the Peptidase M14 domain. The Zn(2+) site is built by H60, E63, and H168. Residue E221 is the Proton donor/acceptor of the active site.

This sequence belongs to the peptidase M14 family. Homodimer. Zn(2+) serves as cofactor.

The protein localises to the cytoplasm. The catalysed reaction is L-alanyl-gamma-D-glutamyl-meso-2,6-diaminopimelate + H2O = L-alanyl-D-glutamate + meso-2,6-diaminopimelate. Its pathway is cell wall degradation; peptidoglycan degradation. Functionally, involved in muropeptide degradation. Catalyzes the hydrolysis of the gamma-D-glutamyl-diaminopimelic acid (gamma-D-Glu-Dap) amide bond in the murein tripeptide L-alanyl-gamma-D-glutamyl-meso-diaminopimelic acid, leading to the formation of L-Ala-gamma-D-Glu and Dap. Has weak activity with L-Ala-gamma-D-Glu-L-Lys, MurNAc-tripeptide and gamma-D-Glu-meso-Dap. Cannot hydrolyze murein tetrapeptide. In Vibrio campbellii (strain ATCC BAA-1116), this protein is Murein peptide amidase A.